The sequence spans 400 residues: tRNA(Ile)-lysidine synthase (400 aa).

An ATP-binding site is contributed by 25-30 (SGGVDS).

Belongs to the tRNA(Ile)-lysidine synthase family.

It localises to the cytoplasm. It carries out the reaction cytidine(34) in tRNA(Ile2) + L-lysine + ATP = lysidine(34) in tRNA(Ile2) + AMP + diphosphate + H(+). Functionally, ligates lysine onto the cytidine present at position 34 of the AUA codon-specific tRNA(Ile) that contains the anticodon CAU, in an ATP-dependent manner. Cytidine is converted to lysidine, thus changing the amino acid specificity of the tRNA from methionine to isoleucine. The protein is tRNA(Ile)-lysidine synthase of Francisella philomiragia subsp. philomiragia (strain ATCC 25017 / CCUG 19701 / FSC 153 / O#319-036).